The following is a 347-amino-acid chain: MAEERHHTEHIPQWKKDEIENIKELIQSHKVFGMVRIEGILATKIQKIRRDLKDVAVLKVSRNTLTERALNQLGESIPEMTRYLDNQTALIFTNESPFKLYKLLEQTKTPSPIKAGAIAPEDIIVQKGPTSFPPGPILGELQSAGIPASIDAGKVAVKETKVVCKAGEAVPQKLATMLSKLEIYPLIVGLDLRAAYDDGTIYEPELLAVDESKYFSDIIRAAQNAFNLSVNTAYPTGATIGTLLAKAYAESKSLGVNAVILEPGVMDSLLAKAHVQMTSVASEAAEKDANAVDDDLREVLGAAASAAAAATVAAPAAEEEKKEEEPEEEEEDHAEEDGMAGLGALFG.

The tract at residues 310–347 is disordered; the sequence is ATVAAPAAEEEKKEEEPEEEEEDHAEEDGMAGLGALFG. A compositionally biased stretch (acidic residues) spans 325–338; that stretch reads EPEEEEEDHAEEDG.

It belongs to the universal ribosomal protein uL10 family. Part of the 50S ribosomal subunit. Forms part of the ribosomal stalk which helps the ribosome interact with GTP-bound translation factors. Forms a heptameric L10(L12)2(L12)2(L12)2 complex, where L10 forms an elongated spine to which the L12 dimers bind in a sequential fashion.

Forms part of the ribosomal stalk, playing a central role in the interaction of the ribosome with GTP-bound translation factors. In Methanosarcina mazei (strain ATCC BAA-159 / DSM 3647 / Goe1 / Go1 / JCM 11833 / OCM 88) (Methanosarcina frisia), this protein is Large ribosomal subunit protein uL10.